The chain runs to 200 residues: MRIYYIGVFRSGGEKALELSEVKDLSQFGFFERSSVGQFMTFFAETVASRTGAGQRQSIEEGNYIGHVYARSEGICGVLITDKEYPVRPAYTLLNKILDEYLVAHPKEEWADVTETNDALKMKQLDTYISKYQDPSQADAIMKVQQELDETKIVLHKTIENVLQRGEKLDNLVDKSESLTASSKMFYKQAKKSNSCCIIM.

Residues 7-129 form the Longin domain; the sequence is GVFRSGGEKA…LKMKQLDTYI (123 aa). The v-SNARE coiled-coil homology domain maps to 140–200; it reads AIMKVQQELD…KKSNSCCIIM (61 aa). At threonine 158 the chain carries Phosphothreonine. Cysteine 196 carries the S-palmitoyl cysteine lipid modification. The residue at position 197 (cysteine 197) is a Cysteine methyl ester. A lipid anchor (S-farnesyl cysteine) is attached at cysteine 197. A propeptide spans 198 to 200 (removed in mature form); it reads IIM.

This sequence belongs to the synaptobrevin family.

The protein resides in the cell membrane. This chain is Synaptobrevin homolog YKT6 (YKT6), found in Saccharomyces cerevisiae (strain ATCC 204508 / S288c) (Baker's yeast).